Reading from the N-terminus, the 497-residue chain is Putative endothelial lipase (497 aa).

The signal sequence occupies residues 1-23; the sequence is MRACPFLLLLLLPLLLSLGRIAA. Residues Cys73 and Cys86 are joined by a disulfide bond. 2 N-linked (GlcNAc...) asparagine glycosylation sites follow: Asn89 and Asn145. Ser178 serves as the catalytic Nucleophile. Asp202 functions as the Charge relay system in the catalytic mechanism. The cysteines at positions 262 and 282 are disulfide-linked. His284 functions as the Charge relay system in the catalytic mechanism. Intrachain disulfides connect Cys307/Cys326 and Cys318/Cys321. 335-347 lines the heparin pocket; sequence KMRNKRNSKMYLK. The region spanning 357 to 492 is the PLAT domain; that stretch reads FHYQLKIHVF…CLKMVKVEKH (136 aa). Asn403 carries an N-linked (GlcNAc...) asparagine glycan.

It belongs to the AB hydrolase superfamily. Lipase family. In terms of assembly, head to tail homodimer. Expressed by the venom gland.

The protein localises to the secreted. It carries out the reaction a triacylglycerol + H2O = a diacylglycerol + a fatty acid + H(+). Its activity is regulated as follows. Inhibited by serum. Has phospholipase and triglyceride lipase activities. This chain is Putative endothelial lipase, found in Crotalus adamanteus (Eastern diamondback rattlesnake).